We begin with the raw amino-acid sequence, 106 residues long: N(4)-acetylcytidine amidohydrolase (106 aa).

In terms of domain architecture, ASCH spans 9-105 (TFFEFLTPLI…ELYVIEYELI (97 aa)). Lysine 23 functions as the Proton acceptor in the catalytic mechanism. Residue threonine 26 is the Nucleophile of the active site. Glutamate 76 functions as the Proton donor in the catalytic mechanism.

It belongs to the N(4)-acetylcytidine amidohydrolase family.

It carries out the reaction N(4)-acetylcytidine + H2O = cytidine + acetate + H(+). The enzyme catalyses N(4)-acetyl-2'-deoxycytidine + H2O = 2'-deoxycytidine + acetate + H(+). It catalyses the reaction N(4)-acetylcytosine + H2O = cytosine + acetate + H(+). Its function is as follows. Catalyzes the hydrolysis of N(4)-acetylcytidine (ac4C). The chain is N(4)-acetylcytidine amidohydrolase from Vibrio campbellii (strain ATCC BAA-1116).